The sequence spans 354 residues: Sulfate permease CysP (354 aa).

8 consecutive transmembrane segments (helical) span residues 3 to 23, 40 to 60, 77 to 97, 125 to 145, 164 to 184, 197 to 217, 293 to 313, and 320 to 340; these read LAAI…GAAA, ALIL…GEVV, IVCI…LLGI, LIIV…TYFV, ILGI…GMNN, VLDV…GALL, VWIV…SLFL, and IFIM…TKAI.

Belongs to the inorganic phosphate transporter (PiT) (TC 2.A.20) family.

It localises to the cell membrane. Involved in the import of sulfate. This is Sulfate permease CysP (cysP) from Bacillus subtilis (strain 168).